Consider the following 375-residue polypeptide: 23S rRNA (uracil(747)-C(5))-methyltransferase RlmC (375 aa).

The [4Fe-4S] cluster site is built by Cys3, Cys11, Cys14, and Cys87. Positions 212, 241, 262, and 307 each coordinate S-adenosyl-L-methionine. Catalysis depends on Cys334, which acts as the Nucleophile.

The protein belongs to the class I-like SAM-binding methyltransferase superfamily. RNA M5U methyltransferase family. RlmC subfamily.

It carries out the reaction uridine(747) in 23S rRNA + S-adenosyl-L-methionine = 5-methyluridine(747) in 23S rRNA + S-adenosyl-L-homocysteine + H(+). In terms of biological role, catalyzes the formation of 5-methyl-uridine at position 747 (m5U747) in 23S rRNA. The sequence is that of 23S rRNA (uracil(747)-C(5))-methyltransferase RlmC from Escherichia coli O139:H28 (strain E24377A / ETEC).